A 427-amino-acid chain; its full sequence is Trigger factor (427 aa).

In terms of domain architecture, PPIase FKBP-type spans 163–248; the sequence is GDTVVIDFEG…VHEVKAKELP (86 aa).

It belongs to the FKBP-type PPIase family. Tig subfamily.

Its subcellular location is the cytoplasm. The catalysed reaction is [protein]-peptidylproline (omega=180) = [protein]-peptidylproline (omega=0). In terms of biological role, involved in protein export. Acts as a chaperone by maintaining the newly synthesized protein in an open conformation. Functions as a peptidyl-prolyl cis-trans isomerase. The polypeptide is Trigger factor (Enterococcus faecalis (strain ATCC 700802 / V583)).